The sequence spans 97 residues: MNKIIAALVLFTAVIGALADYPAPPPPPPKPYHAPPPPPYHAPPHHAPAPLHPVVHTYPVKAPAAKCGANLLVGCAPSVAHVPCVPVHPHPPPPAHY.

The signal sequence occupies residues 1 to 19 (MNKIIAALVLFTAVIGALA). The segment at 20–23 (DYPA) is required for binding to the gut receptor. Positions 26 to 46 (PPPPKPYHAPPPPPYHAPPHH) are disordered. The VM domain occupies 61–97 (KAPAAKCGANLLVGCAPSVAHVPCVPVHPHPPPPAHY).

The protein belongs to the vitelline membrane protein family. As to expression, expressed in the anterior region of the follicle cells.

Its subcellular location is the secreted. In terms of biological role, has an oostatic activity. Inhibits trypsin biosynthesis in the midgut epithelial cells which indirectly reduces the vitellogenin concentration in the hemolymph resulting in inhibition of oocyte development. In Aedes aegypti (Yellowfever mosquito), this protein is Vitelline membrane protein 15a-2 (15a-2).